Consider the following 714-residue polypeptide: Choline transporter-like protein 5 (714 aa).

At 1–33 the chain is on the cytoplasmic side; the sequence is MGRRSAAPTSPFGEPRKFDPKFKGPIGKRHCTD. The chain crosses the membrane as a helical span at residues 34-54; sequence VLCCIIFVVVILGYIALGVVA. Residues 55–237 are Extracellular-facing; that stretch reads WIHGDPRKII…KIFEDYASSW (183 aa). N-linked (GlcNAc...) asparagine glycosylation is found at N83, N132, N192, and N205. The helical transmembrane segment at 238–258 threads the bilayer; that stretch reads YWILIALFIAMVVSLLFLILL. Over 259-261 the chain is Cytoplasmic; sequence RFT. A helical transmembrane segment spans residues 262–282; sequence AGVFFWIFIIGVIGVVGYGIW. The Extracellular portion of the chain corresponds to 283–320; that stretch reads HCFWEYDSLKGVPGADLTIYDIGLQTDFRVYLQLRQTW. The chain crosses the membrane as a helical span at residues 321–341; sequence LAFMILLCIVEVIIILMLIFL. At 342–346 the chain is on the cytoplasmic side; that stretch reads RNRIR. Residues 347-367 traverse the membrane as a helical segment; the sequence is IAIALLQEGSRAIGYIMSTLF. At 368-369 the chain is on the extracellular side; the sequence is YP. The chain crosses the membrane as a helical span at residues 370–390; it reads IITFILIAICISYWAVTAVFM. Over 391 to 455 the chain is Cytoplasmic; the sequence is ATSGEPIYKV…QYILIFQLCN (65 aa). The helical transmembrane segment at 456–476 threads the bilayer; that stretch reads VFVFLWLVNFSIALGQCTLAG. Over 477-510 the chain is Extracellular; that stretch reads AFASYYWAFKKPADIPACPLFSSFGRAIRYHTGS. The chain crosses the membrane as a helical span at residues 511–531; that stretch reads LALGSLILALVQFIRIILEYL. Topologically, residues 532–605 are cytoplasmic; sequence DHKLKASQNS…RVAVLDKVTD (74 aa). A helical membrane pass occupies residues 606–626; it reads FLLFLGKVFVTGSVGVLAFFF. At 627 to 644 the chain is on the extracellular side; it reads FTRKIPVLTDEAPALNYY. Residues 645–665 traverse the membrane as a helical segment; it reads WVPLLTVLIGSYLIAHGFFSV. The Cytoplasmic portion of the chain corresponds to 666-711; that stretch reads YAMCVDTLFLCFCEDLERNNGSSSKPYYMSPNLHRILGKKEILSKK.

The protein belongs to the CTL (choline transporter-like) family.

The protein resides in the cell membrane. The catalysed reaction is choline(out) + n H(+)(in) = choline(in) + n H(+)(out). In terms of biological role, choline/H+ antiporter. This Xenopus tropicalis (Western clawed frog) protein is Choline transporter-like protein 5 (slc44a5).